We begin with the raw amino-acid sequence, 339 residues long: Delta(9)-fatty-acid desaturase fat-6 (339 aa).

4 helical membrane-spanning segments follow: residues 52-72, 77-97, 195-215, and 219-241; these read VALFAALHFAAAIGLYQLIFE, TVIFTFLLYVFGGFGITAGAH, YFPLVILCCFILPTIIPVYFW, and AFIAFYTAGTFRYCFTLHATWCI.

Belongs to the fatty acid desaturase type 1 family. In terms of tissue distribution, expressed in the intestine in adult worms and in all four larval stages. Additional expression in the hypodermis in all life stages.

The protein resides in the membrane. The enzyme catalyses octadecanoyl-CoA + 2 Fe(II)-[cytochrome b5] + O2 + 2 H(+) = (9Z)-octadecenoyl-CoA + 2 Fe(III)-[cytochrome b5] + 2 H2O. It carries out the reaction hexadecanoyl-CoA + 2 Fe(II)-[cytochrome b5] + O2 + 2 H(+) = (9Z)-hexadecenoyl-CoA + 2 Fe(III)-[cytochrome b5] + 2 H2O. It catalyses the reaction heptadecanoyl-CoA + 2 Fe(II)-[cytochrome b5] + O2 + 2 H(+) = (9Z)-heptadecenoyl-CoA + 2 Fe(III)-[cytochrome b5] + 2 H2O. The catalysed reaction is (11E)-octadecenoyl-CoA + 2 Fe(II)-[cytochrome b5] + O2 + 2 H(+) = (9Z,11E)-octadecadienoyl-CoA + 2 Fe(III)-[cytochrome b5] + 2 H2O. It participates in lipid metabolism; monounsaturated fatty acid biosynthesis. Its pathway is lipid metabolism; fatty acid metabolism. In terms of biological role, delta(9)-fatty acid desaturase that acts preferentially on stearoyl-CoA (octadecanoyl-CoA) producing the monounsaturated oleoyl-CoA ((9Z)-octadecenoyl-CoA), one of the most abundant monounsaturated fatty acid in Caenorhabditis elegans phospholipids and triacylglycerols. Also acts on palmitoyl-CoA (hexadecanoyl-CoA), heptadecanoyl-CoA and (11E)-octadecenoyl-CoA (trans-vaccenoyl-CoA), the monounsaturated fatty acids (MUFAs) produced are further used as substrates to synthesize polyunsaturated fatty acids (PUFAs) by several other desaturases and elongases. Unlike plants, Caenorhabditis elegans desaturases seem to use fatty acyl-CoAs as substrates. This is Delta(9)-fatty-acid desaturase fat-6 (fat-6) from Caenorhabditis elegans.